Reading from the N-terminus, the 264-residue chain is NADH-quinone oxidoreductase subunit B 1 (264 aa).

Positions 42, 43, 108, and 138 each coordinate [4Fe-4S] cluster.

This sequence belongs to the complex I 20 kDa subunit family. NDH-1 is composed of 14 different subunits. Subunits NuoB, C, D, E, F, and G constitute the peripheral sector of the complex. Requires [4Fe-4S] cluster as cofactor.

The protein localises to the cell membrane. It catalyses the reaction a quinone + NADH + 5 H(+)(in) = a quinol + NAD(+) + 4 H(+)(out). NDH-1 shuttles electrons from NADH, via FMN and iron-sulfur (Fe-S) centers, to quinones in the respiratory chain. The immediate electron acceptor for the enzyme in this species is believed to be ubiquinone. Couples the redox reaction to proton translocation (for every two electrons transferred, four hydrogen ions are translocated across the cytoplasmic membrane), and thus conserves the redox energy in a proton gradient. This chain is NADH-quinone oxidoreductase subunit B 1, found in Chloroflexus aurantiacus (strain ATCC 29366 / DSM 635 / J-10-fl).